We begin with the raw amino-acid sequence, 181 residues long: Adenine phosphoribosyltransferase (181 aa).

It belongs to the purine/pyrimidine phosphoribosyltransferase family. Homodimer.

The protein resides in the cytoplasm. It catalyses the reaction AMP + diphosphate = 5-phospho-alpha-D-ribose 1-diphosphate + adenine. Its pathway is purine metabolism; AMP biosynthesis via salvage pathway; AMP from adenine: step 1/1. Its function is as follows. Catalyzes a salvage reaction resulting in the formation of AMP, that is energically less costly than de novo synthesis. The chain is Adenine phosphoribosyltransferase from Aeromonas salmonicida (strain A449).